Reading from the N-terminus, the 182-residue chain is Transcription repressor OFP11 (182 aa).

The disordered stretch occupies residues 62-94 (PLHRRHSSENPAGVFSTNRREEEEEDETTTSVS). In terms of domain architecture, OVATE spans 104 to 169 (MKHIESPDPY…VSAFADTLLW (66 aa)).

As to expression, expressed in roots, rosette and cauline leaves, shoots, stems, flower buds and siliques.

It localises to the nucleus. Transcriptional repressor that may regulate multiple aspects of plant growth and development through the regulation of BEL1-LIKE (BLH) and KNOX TALE (KNAT) homeodomain transcription factors. The sequence is that of Transcription repressor OFP11 (OFP11) from Arabidopsis thaliana (Mouse-ear cress).